The sequence spans 355 residues: Natterin-1 (355 aa).

An N-terminal signal peptide occupies residues 1-18 (MIPSVLLVTLLLLSWTSA). Positions 19 to 27 (EKDLKVRVA) are excised as a propeptide.

This sequence belongs to the natterin family. In terms of processing, contains 4 disulfide bonds. In terms of tissue distribution, expressed by the venom gland.

The protein resides in the secreted. Inhibited by tissue-kallikrein inhibitor TKI and trasylol. Plasma kallikrein inhibitor PKSI527 and classical inhibitors of serine-, metallo-, thiol- or aspartate-peptidases evokes a minor inhibition of the peptide digestion. In terms of biological role, shows nociceptive, edema-inducing and kininogenase activity with release of kallidin from low molecular weight kininogen. The cleavage occurs at Met-Lys bonds. The sequence is that of Natterin-1 from Thalassophryne nattereri (Copper Joe toadfish).